Reading from the N-terminus, the 369-residue chain is Serine/threonine-protein phosphatase PP2A-1 catalytic subunit (369 aa).

The tract at residues 1–57 (MDTDLDVPMQDAVTEQLTPTVSEDMDLNNNSSDNNAEEFSVDDLKPGSSGIADHKSS) is disordered. Residues aspartate 117, histidine 119, aspartate 145, and asparagine 177 each contribute to the Mn(2+) site. Histidine 178 serves as the catalytic Proton donor. Mn(2+) is bound by residues histidine 227 and histidine 301. A disordered region spans residues 348-369 (QYDPSVRPGEPSVSRKTPDYFL). The residue at position 369 (leucine 369) is a Leucine methyl ester.

The protein belongs to the PPP phosphatase family. PP-2A subfamily. In terms of assembly, inactivated in a complex with phosphatase methylesterase PPE1 (PP2Ai). Interacts with phosphatase 2A activator RRD2, which can reactivate PP2Ai by dissociating the catalytic subunit from the complex. Forms a ternary complex with RRD2-TAP42. Mn(2+) is required as a cofactor. Reversibly methyl esterified on Leu-369 by leucine carboxyl methyltransferase 1 (PPM1) and protein phosphatase methylesterase 1 (PPE1). Carboxyl methylation influences the affinity of the catalytic subunit for the different regulatory subunits, thereby modulating the PP2A holoenzyme's substrate specificity, enzyme activity and cellular localization.

It catalyses the reaction O-phospho-L-seryl-[protein] + H2O = L-seryl-[protein] + phosphate. The catalysed reaction is O-phospho-L-threonyl-[protein] + H2O = L-threonyl-[protein] + phosphate. In terms of biological role, exact function not known, phosphatase 2A performs an essential cellular function. In Saccharomyces cerevisiae (strain ATCC 204508 / S288c) (Baker's yeast), this protein is Serine/threonine-protein phosphatase PP2A-1 catalytic subunit (PPH21).